Consider the following 130-residue polypeptide: Large ribosomal subunit protein uL22 (130 aa).

The protein belongs to the universal ribosomal protein uL22 family. As to quaternary structure, part of the 50S ribosomal subunit.

In terms of biological role, this protein binds specifically to 23S rRNA; its binding is stimulated by other ribosomal proteins, e.g. L4, L17, and L20. It is important during the early stages of 50S assembly. It makes multiple contacts with different domains of the 23S rRNA in the assembled 50S subunit and ribosome. Its function is as follows. The globular domain of the protein is located near the polypeptide exit tunnel on the outside of the subunit, while an extended beta-hairpin is found that lines the wall of the exit tunnel in the center of the 70S ribosome. The polypeptide is Large ribosomal subunit protein uL22 (Clavibacter michiganensis subsp. michiganensis (strain NCPPB 382)).